Consider the following 91-residue polypeptide: uncharacterized protein (91 aa).

The next 2 helical transmembrane spans lie at 22-42 (WPVI…AFVV) and 53-73 (VAGL…LAAA).

The protein localises to the cell membrane. This is an uncharacterized protein from Mycobacterium bovis (strain ATCC BAA-935 / AF2122/97).